The chain runs to 2877 residues: Desmoplakin (2877 aa).

Residues 1-20 (MSCNGGSHPRINTLGRMTRA) form a disordered region. The tract at residues 1-591 (MSCNGGSHPR…DYMKTIEDLE (591 aa)) is interaction with PKP1, JUP, PKP2. The segment at 1–1063 (MSCNGGSHPR…ANSENCNKNK (1063 aa)) is globular 1. Residues Ser22 and Ser62 each carry the phosphoserine modification. Tyr65 carries the phosphotyrosine modification. Position 70 is a phosphothreonine (Thr70). Residues Ser174, Ser175, and Ser183 each carry the phosphoserine modification. Spectrin repeat units follow at residues 185-278 (SGWD…HLRQ) and 279-382 (LQNI…LKEN). A Spectrin 3a repeat occupies 383–453 (AAYFQFFEEA…NLVNKSKKIV (71 aa)). An SH3 domain is found at 465 to 522 (NKPIILRALCDYKQDQKIVHKGDECILKDNNERSKWYVTGPGGVDMLVPSVGLIIPPP). The stretch at 523 to 552 (NPLAVDLSCKIEQYYEAILALWNQLYINMK) is one Spectrin 3b repeat. Spectrin repeat units follow at residues 553 to 634 (SLVS…IQLP), 661 to 776 (VIET…SLCS), and 777 to 890 (VRAL…DLEK). 4 coiled-coil regions span residues 1034-1280 (LKLK…AEEN), 1313-1354 (NARH…YENE), 1395-1443 (TSGY…QKAS), and 1473-1926 (KQSL…KLED). The central fibrous rod domain stretch occupies residues 1064–1952 (FLDQNLQKYQ…QKEIDKLRQR (889 aa)). A phosphoserine mark is found at Ser1665, Ser1715, and Ser2031. Residues 1953–2877 (PYGSHRETQT…YSFSSSSIGY (925 aa)) form a globular 2 region. Residues 1967–2215 (TVDSSKLVFD…LLLSVQKRSM (249 aa)) form a 4.5 X 38 AA tandem repeats (Domain A) region. Plectin repeat units lie at residues 2016 to 2052 (QPFL…PEST), 2053 to 2090 (VMLL…FDDR), 2091 to 2128 (QQIY…RETG), 2129 to 2166 (MRLL…RDLY), 2170 to 2204 (NDPR…PHTG), 2205 to 2240 (LLLL…PSTV), 2258 to 2295 (KDFL…PGTA), 2296 to 2333 (LELL…IEFK), 2334 to 2371 (EKLL…KGHG), 2372 to 2409 (IRLL…EELS), 2413 to 2447 (SDPS…EETG), 2463 to 2500 (SQKN…YETF), 2514 to 2551 (TITG…RKFF), 2617 to 2654 (SDPL…SITG), 2655 to 2692 (QRLL…QDMA), 2731 to 2768 (QRFL…GRAA), and 2769 to 2806 (QRLQ…DITG). Ser2214, Ser2216, and Ser2232 each carry phosphoserine. A 4.5 X 38 AA tandem repeats (Domain B) region spans residues 2251-2453 (DEVGERIKDF…EETGLCLLPL (203 aa)). Residues 2603-2628 (ISSVRNLTIRSSSLSDPLEESSPIAA) form an LRR 15 repeat. A 4.5 X 38 AA tandem repeats (Domain C) region spans residues 2616 to 2828 (LSDPLEESSP…GLPSPYNMSA (213 aa)). Residues Ser2817 and Ser2822 each carry the phosphoserine modification. A disordered region spans residues 2817 to 2877 (SKGLPSPYNM…YSFSSSSIGY (61 aa)). Residue Tyr2824 is modified to Phosphotyrosine. Residues Ser2827 and Ser2831 each carry the phosphoserine modification. A 6 X 4 AA tandem repeats of G-S-R-[SR] region spans residues 2830–2853 (GSRSGSRSGSRSGSRSGSRSGSRR). Over residues 2830-2853 (GSRSGSRSGSRSGSRSGSRSGSRR) the composition is skewed to low complexity. An omega-N-methylarginine mark is found at Arg2832 and Arg2853. Ser2855 carries the post-translational modification Phosphoserine. Thr2859 is subject to Phosphothreonine. Residues 2862–2877 (SSYSYSYSFSSSSIGY) are compositionally biased toward low complexity. Phosphoserine is present on Ser2874.

The protein belongs to the plakin or cytolinker family. As to quaternary structure, homodimer. Interacts with COL17A1 (via cytoplasmic region). Interacts with DSC2. Interacts with PKP1. Interacts with PKP2. Interacts weakly with TMEM65. In terms of processing, phosphorylation at Ser-2855 increases association with intermediate filament cytokeratin, potentially facilitating interaction between desmosome junctions and intermediate filament architecture. Expressed in cardiomyocytes (at protein level).

It is found in the cell junction. It localises to the desmosome. Its subcellular location is the cell membrane. The protein resides in the cytoplasm. Its function is as follows. Major high molecular weight protein of desmosomes. Regulates profibrotic gene expression in cardiomyocytes via activation of the MAPK14/p38 MAPK signaling cascade and increase in TGFB1 protein abundance. In Rattus norvegicus (Rat), this protein is Desmoplakin.